A 563-amino-acid chain; its full sequence is Merozoite receptor PK66 (563 aa).

The signal sequence occupies residues 1–13 (MNKIYYILFLSAQ). At 14-487 (CLVHMGKCER…DGKHKKKMLL (474 aa)) the chain is on the extracellular side. 6 N-linked (GlcNAc...) asparagine glycosylation sites follow: Asn-36, Asn-107, Asn-176, Asn-189, Asn-238, and Asn-441. The helical transmembrane segment at 488 to 508 (IIIGVTGAVCVVAVASLFYFR) threads the bilayer. Residues 509–563 (KKAQDDKYDKMDQAEAYGKTANTRKDEMLDPEASFWGEDKRASHTTPVLMEKPYY) are Cytoplasmic-facing.

Belongs to the apicomplexan parasites AMA1 family.

It is found in the membrane. Functionally, merozoite receptor PK66 is a surface antigen involved in parasite invasion of erythrocytes. This chain is Merozoite receptor PK66 (PK66), found in Plasmodium knowlesi (strain nuri).